A 353-amino-acid polypeptide reads, in one-letter code: Photosystem II protein D1 (353 aa).

Threonine 2 is subject to N-acetylthreonine. Threonine 2 carries the post-translational modification Phosphothreonine. Helical transmembrane passes span tyrosine 29–serine 46, histidine 118–leucine 133, and tryptophan 142–alanine 156. Residue histidine 118 participates in chlorophyll a binding. Tyrosine 126 serves as a coordination point for pheophytin a. Positions 170 and 189 each coordinate [CaMn4O5] cluster. The chain crosses the membrane as a helical span at residues phenylalanine 197–leucine 218. Histidine 198 is a chlorophyll a binding site. A quinone contacts are provided by residues histidine 215 and serine 264–phenylalanine 265. Histidine 215 is a binding site for Fe cation. Fe cation is bound at residue histidine 272. A helical membrane pass occupies residues phenylalanine 274–leucine 288. The [CaMn4O5] cluster site is built by histidine 332, glutamate 333, aspartate 342, and alanine 344. The propeptide occupies alanine 345–glycine 353.

Belongs to the reaction center PufL/M/PsbA/D family. PSII is composed of 1 copy each of membrane proteins PsbA, PsbB, PsbC, PsbD, PsbE, PsbF, PsbH, PsbI, PsbJ, PsbK, PsbL, PsbM, PsbT, PsbX, PsbY, PsbZ, Psb30/Ycf12, at least 3 peripheral proteins of the oxygen-evolving complex and a large number of cofactors. It forms dimeric complexes. The D1/D2 heterodimer binds P680, chlorophylls that are the primary electron donor of PSII, and subsequent electron acceptors. It shares a non-heme iron and each subunit binds pheophytin, quinone, additional chlorophylls, carotenoids and lipids. D1 provides most of the ligands for the Mn4-Ca-O5 cluster of the oxygen-evolving complex (OEC). There is also a Cl(-1) ion associated with D1 and D2, which is required for oxygen evolution. The PSII complex binds additional chlorophylls, carotenoids and specific lipids. serves as cofactor. Post-translationally, tyr-161 forms a radical intermediate that is referred to as redox-active TyrZ, YZ or Y-Z. C-terminally processed by CTPA; processing is essential to allow assembly of the oxygen-evolving complex and thus photosynthetic growth.

It is found in the plastid. It localises to the chloroplast thylakoid membrane. It carries out the reaction 2 a plastoquinone + 4 hnu + 2 H2O = 2 a plastoquinol + O2. Photosystem II (PSII) is a light-driven water:plastoquinone oxidoreductase that uses light energy to abstract electrons from H(2)O, generating O(2) and a proton gradient subsequently used for ATP formation. It consists of a core antenna complex that captures photons, and an electron transfer chain that converts photonic excitation into a charge separation. The D1/D2 (PsbA/PsbD) reaction center heterodimer binds P680, the primary electron donor of PSII as well as several subsequent electron acceptors. The sequence is that of Photosystem II protein D1 from Buxus microphylla (Littleleaf boxwood).